Here is a 416-residue protein sequence, read N- to C-terminus: Cytochrome P450 monooxygenase PikC (416 aa).

Residues Glu-94, 187-191, and 238-246 each bind substrate; these read AQTAM and HILLVAGHE. Cys-354 lines the heme pocket.

Belongs to the cytochrome P450 family. Heme serves as cofactor.

It catalyses the reaction narbomycin + 2 reduced [2Fe-2S]-[ferredoxin] + O2 + 2 H(+) = pikromycin + 2 oxidized [2Fe-2S]-[ferredoxin] + H2O. The catalysed reaction is narbomycin + 2 reduced [2Fe-2S]-[ferredoxin] + O2 + 2 H(+) = neopikromycin + 2 oxidized [2Fe-2S]-[ferredoxin] + H2O. The enzyme catalyses narbomycin + 4 reduced [2Fe-2S]-[ferredoxin] + 2 O2 + 4 H(+) = novapikromycin + 4 oxidized [2Fe-2S]-[ferredoxin] + 2 H2O. It carries out the reaction 10-deoxymethymycin + 2 reduced [2Fe-2S]-[ferredoxin] + O2 + 2 H(+) = methymycin + 2 oxidized [2Fe-2S]-[ferredoxin] + H2O. It catalyses the reaction 10-deoxymethymycin + 2 reduced [2Fe-2S]-[ferredoxin] + O2 + 2 H(+) = neomethymycin + 2 oxidized [2Fe-2S]-[ferredoxin] + H2O. The catalysed reaction is 10-deoxymethymycin + 4 reduced [2Fe-2S]-[ferredoxin] + 2 O2 + 4 H(+) = novamethymycin + 4 oxidized [2Fe-2S]-[ferredoxin] + 2 H2O. Its pathway is antibiotic biosynthesis. Catalyzes the hydroxylation of narbomycin to give rise to pikromycin, and of 10-deoxymethymycin (YC-17) to give rise to methymycin and neomethymycin during macrolide antibiotic biosynthesis. In addition, produces low amounts of neopicromycin, novapikromycin and novamethymycin. Requires the participation of a ferredoxin and a ferredoxin reductase for the transfer of electrons from NADPH to the monooxygenase. This chain is Cytochrome P450 monooxygenase PikC, found in Streptomyces venezuelae.